The sequence spans 161 residues: Inner membrane assembly complex subunit 17 (161 aa).

A mitochondrion-targeting transit peptide spans 1-22 (MLNPRPCVPRLLSAVARCHKPY). Over 23–84 (STSIKSLEDL…QQQQQALKKF (62 aa)) the chain is Mitochondrial matrix. Residues 85–107 (VRPMWIFLLMSSFFYLTGHYIWW) form a helical membrane-spanning segment. Over 108–161 (KLEYDEREIELHKQVQALRQELDSAIAAKHSGKEPALSGAGAKKPKRWYLAWLW) the chain is Mitochondrial intermembrane. Residues 109 to 138 (LEYDEREIELHKQVQALRQELDSAIAAKHS) are a coiled coil.

This sequence belongs to the INA17 family. In terms of assembly, component of the inner membrane assembly (INA) complex, composed of INA17 and INA22. Interacts with a subset of F(1)F(0)-ATP synthase subunits of the F(1)-domain and the peripheral stalk.

It localises to the mitochondrion inner membrane. Functionally, component of the INA complex (INAC) that promotes the biogenesis of mitochondrial F(1)F(0)-ATP synthase. INAC facilitates the assembly of the peripheral stalk and promotes the assembly of the catalytic F(1)-domain with the membrane-embedded F(0)-domain. The protein is Inner membrane assembly complex subunit 17 of Lachancea thermotolerans (strain ATCC 56472 / CBS 6340 / NRRL Y-8284) (Yeast).